A 122-amino-acid chain; its full sequence is Large ribosomal subunit protein uL14 (122 aa).

This sequence belongs to the universal ribosomal protein uL14 family. In terms of assembly, part of the 50S ribosomal subunit. Forms a cluster with proteins L3 and L19. In the 70S ribosome, L14 and L19 interact and together make contacts with the 16S rRNA in bridges B5 and B8.

Functionally, binds to 23S rRNA. Forms part of two intersubunit bridges in the 70S ribosome. The polypeptide is Large ribosomal subunit protein uL14 (Bacillus cytotoxicus (strain DSM 22905 / CIP 110041 / 391-98 / NVH 391-98)).